The sequence spans 301 residues: MDLKVVVSLSSRLYTDEIAKMQQRIGCILPLASTHGTQNVQGLGLGQVYSLETVPDYVSMYNYLSDCTLAVLDEVSVDSLILTKIVPGQTYAIKNKYQPFFQWHGTGSLSVMPPVFGREHATVKLESNDVDIVFPMVLPTPIAEEVLQKILLFNVYSRVVMQAPGNADMLDVHMHLGSVSYLGHHYELALPEVPGPLGLALLDNLSLYFCIMVTLLPRASMRLVRGLIRHEHHDLLNLFQEMVPDEIARIDLDDLSVADDLSRMRVMMTYLQSLASLFNLGPRLATAAYSQETLTATCWLR.

Belongs to the herpesviridae TRX2 protein family. In terms of assembly, interacts with TRX1 and major capisd protein/MCP.

The protein resides in the virion. Its subcellular location is the host nucleus. Structural component of the T=16 icosahedral capsid. The capsid is composed of pentamers and hexamers of major capsid protein/MCP, which are linked together by heterotrimers called triplexes. These triplexes are formed by a single molecule of triplex protein 1/TRX1 and two copies of triplex protein 2/TRX2. Additionally, TRX1 is required for efficient transport of TRX2 to the nucleus, which is the site of capsid assembly. The protein is Triplex capsid protein 2 of Homo sapiens (Human).